The sequence spans 306 residues: Glutathione transport system permease protein GsiC (306 aa).

The Cytoplasmic portion of the chain corresponds to 1-8 (MLNYVLKR). Residues 9–29 (LLGLIPTLLIVAVLVFLFVHL) traverse the membrane as a helical segment. At 30–102 (LPGDPARLIA…SRFLPTLWLT (73 aa)) the chain is on the periplasmic side. The ABC transmembrane type-1 domain occupies 95 to 292 (FLPTLWLTIT…LEFILINLVV (198 aa)). A helical transmembrane segment spans residues 103-123 (ITSMIWAVLFGMAIGIAAAVW). Residues 124-134 (RNRWPDRLGMT) lie on the Cytoplasmic side of the membrane. Residues 135–155 (LAVTGISFPAFALGMLLMQIF) form a helical membrane-spanning segment. Residues 156 to 168 (SVDLGWLPTVGAD) lie on the Periplasmic side of the membrane. Residues 169-189 (SWQHYILPSLTLGAAVASVMA) form a helical membrane-spanning segment. The Cytoplasmic portion of the chain corresponds to 190-228 (RFTRSSFVDVLSEDYMRTARAKGVSETWVVLKHGLRNAM). A helical membrane pass occupies residues 229-249 (IPVVTMMGLQFGFLLGGSIVV). The Periplasmic segment spans residues 250 to 278 (EKVFNWPGLGRLLVDSVDMRDYPVIQAEV). The helical transmembrane segment at 279-299 (LLFSLEFILINLVVDVLYAAI) threads the bilayer. The Cytoplasmic segment spans residues 300–306 (NPAIRYK).

This sequence belongs to the binding-protein-dependent transport system permease family. As to quaternary structure, the complex is composed of two ATP-binding proteins (GsiA), two transmembrane proteins (GsiC and GsiD) and a solute-binding protein (GsiB).

The protein resides in the cell inner membrane. Part of the ABC transporter complex GsiABCD involved in glutathione import. Probably responsible for the translocation of the substrate across the membrane. The sequence is that of Glutathione transport system permease protein GsiC from Salmonella typhimurium (strain LT2 / SGSC1412 / ATCC 700720).